A 293-amino-acid chain; its full sequence is Homoserine kinase (293 aa).

84 to 94 contacts ATP; the sequence is PLSRGLGSSSA.

Belongs to the GHMP kinase family. Homoserine kinase subfamily.

It localises to the cytoplasm. It carries out the reaction L-homoserine + ATP = O-phospho-L-homoserine + ADP + H(+). It functions in the pathway amino-acid biosynthesis; L-threonine biosynthesis; L-threonine from L-aspartate: step 4/5. In terms of biological role, catalyzes the ATP-dependent phosphorylation of L-homoserine to L-homoserine phosphate. This chain is Homoserine kinase, found in Aliarcobacter butzleri (strain RM4018) (Arcobacter butzleri).